The primary structure comprises 132 residues: MPGTKQVNVGSLKVGQYVMIDGVPCEIVDISVSKPGKHGGAKARVVGIGIFEKVKKEFVAPTSSKVEVPIIDRRKGQVLAIMGDMVQIMDLQTYETLELPIPEGIEGLEPGGEVEYIEAVGQYKITRVIGGK.

Lys-37 is subject to Hypusine.

The protein belongs to the eIF-5A family.

It is found in the cytoplasm. In terms of biological role, functions by promoting the formation of the first peptide bond. The polypeptide is Translation initiation factor 5A (eif5a) (Methanocaldococcus jannaschii (strain ATCC 43067 / DSM 2661 / JAL-1 / JCM 10045 / NBRC 100440) (Methanococcus jannaschii)).